Here is a 190-residue protein sequence, read N- to C-terminus: Ribose 1,5-bisphosphate phosphokinase PhnN (190 aa).

11–18 (GPSGSGKD) lines the ATP pocket.

The protein belongs to the ribose 1,5-bisphosphokinase family.

The enzyme catalyses alpha-D-ribose 1,5-bisphosphate + ATP = 5-phospho-alpha-D-ribose 1-diphosphate + ADP. It participates in metabolic intermediate biosynthesis; 5-phospho-alpha-D-ribose 1-diphosphate biosynthesis; 5-phospho-alpha-D-ribose 1-diphosphate from D-ribose 5-phosphate (route II): step 3/3. In terms of biological role, catalyzes the phosphorylation of ribose 1,5-bisphosphate to 5-phospho-D-ribosyl alpha-1-diphosphate (PRPP). This is Ribose 1,5-bisphosphate phosphokinase PhnN from Thiobacillus denitrificans (strain ATCC 25259 / T1).